Consider the following 361-residue polypeptide: Methylthioribose-1-phosphate isomerase (361 aa).

Residue Asp-245 is the Proton donor of the active site.

The protein belongs to the eIF-2B alpha/beta/delta subunits family. MtnA subfamily.

The protein resides in the cytoplasm. Its subcellular location is the nucleus. It carries out the reaction 5-(methylsulfanyl)-alpha-D-ribose 1-phosphate = 5-(methylsulfanyl)-D-ribulose 1-phosphate. It functions in the pathway amino-acid biosynthesis; L-methionine biosynthesis via salvage pathway; L-methionine from S-methyl-5-thio-alpha-D-ribose 1-phosphate: step 1/6. Catalyzes the interconversion of methylthioribose-1-phosphate (MTR-1-P) into methylthioribulose-1-phosphate (MTRu-1-P). This is Methylthioribose-1-phosphate isomerase from Monosiga brevicollis (Choanoflagellate).